Here is a 56-residue protein sequence, read N- to C-terminus: Ovomucoid (56 aa).

The region spanning 6 to 56 (VDCSEYPKPACTLEHRPLCGSDNKTYGNKCNFCNAVVESNGTLTLSHFGKC) is the Kazal-like domain. Cystine bridges form between cysteine 8–cysteine 38, cysteine 16–cysteine 35, and cysteine 24–cysteine 56. Asparagine 45 is a glycosylation site (N-linked (GlcNAc...) asparagine).

It is found in the secreted. This is Ovomucoid from Pavo cristatus (Indian peafowl).